The primary structure comprises 84 residues: Small ribosomal subunit protein uS17 (84 aa).

It belongs to the universal ribosomal protein uS17 family. In terms of assembly, part of the 30S ribosomal subunit.

Functionally, one of the primary rRNA binding proteins, it binds specifically to the 5'-end of 16S ribosomal RNA. The protein is Small ribosomal subunit protein uS17 of Hamiltonella defensa subsp. Acyrthosiphon pisum (strain 5AT).